Here is a 302-residue protein sequence, read N- to C-terminus: Nucleotide-binding protein STH186 (302 aa).

15–22 contributes to the ATP binding site; the sequence is GMSGAGKT. 66–69 contacts GTP; that stretch reads DIRG.

Belongs to the RapZ-like family.

Displays ATPase and GTPase activities. The chain is Nucleotide-binding protein STH186 from Symbiobacterium thermophilum (strain DSM 24528 / JCM 14929 / IAM 14863 / T).